We begin with the raw amino-acid sequence, 312 residues long: Aspartate carbamoyltransferase catalytic subunit (312 aa).

Carbamoyl phosphate-binding residues include Arg55 and Thr56. Lys83 is an L-aspartate binding site. 3 residues coordinate carbamoyl phosphate: Arg105, His138, and Gln141. Positions 171 and 225 each coordinate L-aspartate. Residues Gly266 and Pro267 each coordinate carbamoyl phosphate.

Belongs to the aspartate/ornithine carbamoyltransferase superfamily. ATCase family. Heterododecamer (2C3:3R2) of six catalytic PyrB chains organized as two trimers (C3), and six regulatory PyrI chains organized as three dimers (R2).

It carries out the reaction carbamoyl phosphate + L-aspartate = N-carbamoyl-L-aspartate + phosphate + H(+). It functions in the pathway pyrimidine metabolism; UMP biosynthesis via de novo pathway; (S)-dihydroorotate from bicarbonate: step 2/3. Catalyzes the condensation of carbamoyl phosphate and aspartate to form carbamoyl aspartate and inorganic phosphate, the committed step in the de novo pyrimidine nucleotide biosynthesis pathway. This Corynebacterium glutamicum (strain R) protein is Aspartate carbamoyltransferase catalytic subunit.